The following is a 93-amino-acid chain: Small ribosomal subunit protein uS19 (93 aa).

The protein belongs to the universal ribosomal protein uS19 family.

Functionally, protein S19 forms a complex with S13 that binds strongly to the 16S ribosomal RNA. The chain is Small ribosomal subunit protein uS19 from Saccharopolyspora erythraea (strain ATCC 11635 / DSM 40517 / JCM 4748 / NBRC 13426 / NCIMB 8594 / NRRL 2338).